We begin with the raw amino-acid sequence, 268 residues long: Phosphatidylglycerol--prolipoprotein diacylglyceryl transferase (268 aa).

Helical transmembrane passes span 23 to 43 (IGLR…RWLA), 62 to 82 (LLFN…VFFY), 97 to 117 (VWEG…AMIW), 132 to 152 (FVAP…FINL), 179 to 199 (SQLY…NIFI), 206 to 226 (ASVA…VEYV), and 241 to 261 (GQAL…WAYS). Arg-145 is an a 1,2-diacyl-sn-glycero-3-phospho-(1'-sn-glycerol) binding site.

The protein belongs to the Lgt family.

The protein localises to the cell inner membrane. It carries out the reaction L-cysteinyl-[prolipoprotein] + a 1,2-diacyl-sn-glycero-3-phospho-(1'-sn-glycerol) = an S-1,2-diacyl-sn-glyceryl-L-cysteinyl-[prolipoprotein] + sn-glycerol 1-phosphate + H(+). Its pathway is protein modification; lipoprotein biosynthesis (diacylglyceryl transfer). Its function is as follows. Catalyzes the transfer of the diacylglyceryl group from phosphatidylglycerol to the sulfhydryl group of the N-terminal cysteine of a prolipoprotein, the first step in the formation of mature lipoproteins. The sequence is that of Phosphatidylglycerol--prolipoprotein diacylglyceryl transferase from Haemophilus influenzae (strain PittEE).